The sequence spans 557 residues: Nicotinate phosphoribosyltransferase 2 (557 aa).

Tyr-31 and Thr-219 together coordinate nicotinate. At His-222 the chain carries Phosphohistidine. Arg-329 contributes to the nicotinate binding site. Thr-391 contributes to the 5-phospho-alpha-D-ribose 1-diphosphate binding site.

Belongs to the NAPRTase family. The cofactor is Mg(2+). Requires Mn(2+) as cofactor. In terms of processing, transiently phosphorylated on a His residue during the reaction cycle. Phosphorylation strongly increases the affinity for substrates and increases the rate of nicotinate D-ribonucleotide production. Dephosphorylation regenerates the low-affinity form of the enzyme, leading to product release.

It carries out the reaction nicotinate + 5-phospho-alpha-D-ribose 1-diphosphate + ATP + H2O = nicotinate beta-D-ribonucleotide + ADP + phosphate + diphosphate. The protein operates within cofactor biosynthesis; NAD(+) biosynthesis; nicotinate D-ribonucleotide from nicotinate: step 1/1. Its function is as follows. Catalyzes the first step in the biosynthesis of NAD from nicotinic acid, the ATP-dependent synthesis of beta-nicotinate D-ribonucleotide from nicotinate and 5-phospho-D-ribose 1-phosphate. Helps prevent cellular oxidative stress via its role in NAD biosynthesis. In Arabidopsis thaliana (Mouse-ear cress), this protein is Nicotinate phosphoribosyltransferase 2.